The primary structure comprises 783 residues: Polyribonucleotide nucleotidyltransferase 1, mitochondrial (783 aa).

A mitochondrion-targeting transit peptide spans 1 to 46; sequence MAACRYCCSCLRLRPLSDGPFCLPGRDRALTQLLVRALWSSTGSRA. Residues K250, K264, K285, and K289 each carry the N6-acetyllysine modification. K552 is subject to N6-succinyllysine. In terms of domain architecture, KH spans 605-664; that stretch reads PVVETVQVPLSKRAKFVGPGGYNLKKLQAETGVTISQVDEETFSVFAPTPSALHEARDFI. One can recognise an S1 motif domain in the interval 679–750; the sequence is GAVYTATITE…ADGRMRLSRK (72 aa). A phosphoserine mark is found at S754 and S782.

The protein belongs to the polyribonucleotide nucleotidyltransferase family. As to quaternary structure, homotrimer; in free form. Homooligomer. Component of the mitochondrial degradosome (mtEXO) complex which is a heteropentamer containing 2 copies of SUPV3L1 and 3 copies of PNPT1. As part of the mitochondrial degradosome complex, interacts with GRSF1 in an RNA-dependent manner; the interaction enhances the activity of the complex. Interacts with TCL1A; the interaction has no effect on PNPT1 exonuclease activity.

Its subcellular location is the cytoplasm. It localises to the mitochondrion matrix. The protein resides in the mitochondrion intermembrane space. The enzyme catalyses RNA(n+1) + phosphate = RNA(n) + a ribonucleoside 5'-diphosphate. Its function is as follows. RNA-binding protein implicated in numerous RNA metabolic processes. Catalyzes the phosphorolysis of single-stranded polyribonucleotides processively in the 3'-to-5' direction. Mitochondrial intermembrane factor with RNA-processing exoribonulease activity. Component of the mitochondrial degradosome (mtEXO) complex, that degrades 3' overhang double-stranded RNA with a 3'-to-5' directionality in an ATP-dependent manner. Involved in the degradation of non-coding mitochondrial transcripts (MT-ncRNA) and tRNA-like molecules. Required for correct processing and polyadenylation of mitochondrial mRNAs. Plays a role as a cytoplasmic RNA import factor that mediates the translocation of small RNA components like the 5S RNA, the RNA subunit of ribonuclease P and the mitochondrial RNA-processing (MRP) RNA, into the mitochondrial matrix. Plays a role in mitochondrial morphogenesis and respiration; regulates the expression of the electron transport chain (ETC) components at the mRNA and protein levels. In the cytoplasm, shows a 3'-to-5' exoribonuclease mediating mRNA degradation activity; degrades c-myc mRNA upon treatment with IFNB1/IFN-beta, resulting in a growth arrest in melanoma cells. Regulates the stability of specific mature miRNAs in melanoma cells; specifically and selectively degrades miR-221, preferentially. Also plays a role in RNA cell surveillance by cleaning up oxidized RNAs. Binds to the RNA subunit of ribonuclease P, MRP RNA and miR-221 microRNA. The sequence is that of Polyribonucleotide nucleotidyltransferase 1, mitochondrial (PNPT1) from Pongo abelii (Sumatran orangutan).